Consider the following 278-residue polypeptide: uncharacterized protein (278 aa).

The protein belongs to the short-chain dehydrogenases/reductases (SDR) family.

This is an uncharacterized protein from Bacillus subtilis (strain 168).